The primary structure comprises 1120 residues: Mechanosensitive channel MscK (1120 aa).

The signal sequence occupies residues Met1–Ala33. Topologically, residues Arg34–Ala499 are periplasmic. Coiled-coil stretches lie at residues Thr43–Ala98, Ser126–Glu266, and Asp360–Leu422. The chain crosses the membrane as a helical span at residues Trp500–Ile520. The Cytoplasmic portion of the chain corresponds to His521 to Ala560. Residues Leu561–Ile581 traverse the membrane as a helical segment. Ser582 is a topological domain (periplasmic). The helical transmembrane segment at Glu583 to Trp603 threads the bilayer. The Cytoplasmic segment spans residues Lys604–Ser634. The helical transmembrane segment at Leu635–Met655 threads the bilayer. Residues Asp656–Asp657 are Periplasmic-facing. Residues Val658–Met678 form a helical membrane-spanning segment. Residues Cys679 to Arg692 lie on the Cytoplasmic side of the membrane. Residues Leu693–Gly713 traverse the membrane as a helical segment. The Periplasmic portion of the chain corresponds to Tyr714–Thr728. Residues Val729 to Ala749 form a helical membrane-spanning segment. Topologically, residues Ala750–Leu796 are cytoplasmic. A helical transmembrane segment spans residues Leu797–Phe817. Topologically, residues Ser818–Lys839 are periplasmic. A helical transmembrane segment spans residues Asn840–Ile860. Over Arg861 to Thr886 the chain is Cytoplasmic. A helical membrane pass occupies residues Thr887 to Val907. Residues Ser908–Val921 are Periplasmic-facing. A helical membrane pass occupies residues Gly922–Phe942. At Glu943 to Gly1120 the chain is on the cytoplasmic side. Residues Tyr1057 to Glu1081 are a coiled coil.

It belongs to the MscS (TC 1.A.23) family.

The protein localises to the cell inner membrane. Functionally, mechanosensitive channel that opens in response to membrane tension and specific ionic conditions. Requires high concentrations of external K(+), NH(4)(+), Rb(+) or Cs(+) to gate. May participate in the regulation of osmotic pressure changes within the cell, although it does not appear to have a major role in osmolarity regulation. Forms an ion channel of 1.0 nanosiemens conductance. The channel can remain active for between 30 seconds and over 3 minutes; it does not desensitize upon extended pressure. Its activity is masked in wild-type cells by the MscS channel. The polypeptide is Mechanosensitive channel MscK (mscK) (Escherichia coli (strain K12)).